We begin with the raw amino-acid sequence, 233 residues long: DNA-directed RNA polymerase V subunit 5C (233 aa).

This sequence belongs to the archaeal Rpo5/eukaryotic RPB5 RNA polymerase subunit family. In terms of assembly, component of the RNA polymerase V complex. Expressed in flower buds and siliques.

It is found in the nucleus. DNA-dependent RNA polymerase catalyzes the transcription of DNA into RNA using the four ribonucleoside triphosphates as substrates. Component of RNA polymerase V involved in RNA-directed DNA methylation-dependent (RdDM) silencing of endogenous repeated sequences, including transposable elements. This chain is DNA-directed RNA polymerase V subunit 5C (NRPE5C), found in Arabidopsis thaliana (Mouse-ear cress).